A 29-amino-acid polypeptide reads, in one-letter code: GLYCCQPKPNGQMMCNRWCEINSRCCGRR.

Intrachain disulfides connect Cys4-Cys19, Cys5-Cys25, and Cys15-Cys26. Cys26 carries the post-translational modification Cysteine amide.

This sequence belongs to the conotoxin M superfamily. In terms of tissue distribution, expressed by the venom duct.

Its subcellular location is the secreted. The sequence is that of Conotoxin Bu17 from Conus bullatus (Bubble cone).